Reading from the N-terminus, the 251-residue chain is Putative F-box protein PP2-B12 (251 aa).

The F-box domain occupies 1-46 (MNFLDLPEECIATMISFTSPFDACRISAVSKLLRSAADSNTTWERF).

In Arabidopsis thaliana (Mouse-ear cress), this protein is Putative F-box protein PP2-B12 (PP2B12).